Reading from the N-terminus, the 473-residue chain is Photosystem II CP43 reaction center protein (473 aa).

Residues 1–14 (MKTLYSLRRFYPVE) constitute a propeptide that is removed on maturation. N-acetylthreonine is present on Thr15. Position 15 is a phosphothreonine (Thr15). The next 5 membrane-spanning stretches (helical) occupy residues 69–93 (LFEV…PHLA), 134–155 (LLGP…KDRN), 178–200 (KALY…RKIT), 255–275 (KPFA…LSYS), and 291–312 (WFNN…ASQA). Glu367 serves as a coordination point for [CaMn4O5] cluster. The chain crosses the membrane as a helical span at residues 447-471 (RARAAAAGFEKGIDRDFEPVLSMTP).

This sequence belongs to the PsbB/PsbC family. PsbC subfamily. As to quaternary structure, PSII is composed of 1 copy each of membrane proteins PsbA, PsbB, PsbC, PsbD, PsbE, PsbF, PsbH, PsbI, PsbJ, PsbK, PsbL, PsbM, PsbT, PsbX, PsbY, PsbZ, Psb30/Ycf12, at least 3 peripheral proteins of the oxygen-evolving complex and a large number of cofactors. It forms dimeric complexes. Binds multiple chlorophylls and provides some of the ligands for the Ca-4Mn-5O cluster of the oxygen-evolving complex. It may also provide a ligand for a Cl- that is required for oxygen evolution. PSII binds additional chlorophylls, carotenoids and specific lipids. serves as cofactor.

The protein localises to the plastid. It is found in the chloroplast thylakoid membrane. In terms of biological role, one of the components of the core complex of photosystem II (PSII). It binds chlorophyll and helps catalyze the primary light-induced photochemical processes of PSII. PSII is a light-driven water:plastoquinone oxidoreductase, using light energy to abstract electrons from H(2)O, generating O(2) and a proton gradient subsequently used for ATP formation. The polypeptide is Photosystem II CP43 reaction center protein (Gossypium hirsutum (Upland cotton)).